The chain runs to 209 residues: Redox-sensing transcriptional repressor Rex (209 aa).

The H-T-H motif DNA-binding region spans 16 to 55 (VYIQVLTGLKRDGVEVISSEKLARACSVNPSQIRKDLAYF). Position 90–95 (90–95 (GVGNLG)) interacts with NAD(+).

This sequence belongs to the transcriptional regulatory Rex family. Homodimer.

It is found in the cytoplasm. Its function is as follows. Modulates transcription in response to changes in cellular NADH/NAD(+) redox state. In Maridesulfovibrio salexigens (strain ATCC 14822 / DSM 2638 / NCIMB 8403 / VKM B-1763) (Desulfovibrio salexigens), this protein is Redox-sensing transcriptional repressor Rex.